Consider the following 90-residue polypeptide: Small ribosomal subunit protein bS20 (90 aa).

Residues 1 to 15 (MANHKSAQKRIRQTK) show a composition bias toward basic residues. A disordered region spans residues 1–22 (MANHKSAQKRIRQTKTRTERNR).

This sequence belongs to the bacterial ribosomal protein bS20 family.

Its function is as follows. Binds directly to 16S ribosomal RNA. This chain is Small ribosomal subunit protein bS20, found in Helicobacter hepaticus (strain ATCC 51449 / 3B1).